Consider the following 340-residue polypeptide: Tetraacyldisaccharide 4'-kinase (340 aa).

Residue 47–54 participates in ATP binding; it reads SVGGTGKT.

The protein belongs to the LpxK family.

It carries out the reaction a lipid A disaccharide + ATP = a lipid IVA + ADP + H(+). The protein operates within glycolipid biosynthesis; lipid IV(A) biosynthesis; lipid IV(A) from (3R)-3-hydroxytetradecanoyl-[acyl-carrier-protein] and UDP-N-acetyl-alpha-D-glucosamine: step 6/6. Its function is as follows. Transfers the gamma-phosphate of ATP to the 4'-position of a tetraacyldisaccharide 1-phosphate intermediate (termed DS-1-P) to form tetraacyldisaccharide 1,4'-bis-phosphate (lipid IVA). The sequence is that of Tetraacyldisaccharide 4'-kinase from Flavobacterium johnsoniae (strain ATCC 17061 / DSM 2064 / JCM 8514 / BCRC 14874 / CCUG 350202 / NBRC 14942 / NCIMB 11054 / UW101) (Cytophaga johnsonae).